The following is a 225-amino-acid chain: Peptidyl-tRNA hydrolase (225 aa).

TRNA is bound at residue Tyr27. His32 (proton acceptor) is an active-site residue. Tyr78, Asn80, and Asn126 together coordinate tRNA. Residues 198–225 (FNPLDFSGPDRQDQPAPLNPAKTAPGES) are disordered.

It belongs to the PTH family. Monomer.

The protein resides in the cytoplasm. The catalysed reaction is an N-acyl-L-alpha-aminoacyl-tRNA + H2O = an N-acyl-L-amino acid + a tRNA + H(+). Functionally, hydrolyzes ribosome-free peptidyl-tRNAs (with 1 or more amino acids incorporated), which drop off the ribosome during protein synthesis, or as a result of ribosome stalling. Catalyzes the release of premature peptidyl moieties from peptidyl-tRNA molecules trapped in stalled 50S ribosomal subunits, and thus maintains levels of free tRNAs and 50S ribosomes. This is Peptidyl-tRNA hydrolase from Synechococcus sp. (strain JA-3-3Ab) (Cyanobacteria bacterium Yellowstone A-Prime).